The chain runs to 132 residues: Large ribosomal subunit protein bL12 (132 aa).

This sequence belongs to the bacterial ribosomal protein bL12 family. As to quaternary structure, homodimer. Part of the ribosomal stalk of the 50S ribosomal subunit. Forms a multimeric L10(L12)X complex, where L10 forms an elongated spine to which 2 to 4 L12 dimers bind in a sequential fashion. Binds GTP-bound translation factors.

Forms part of the ribosomal stalk which helps the ribosome interact with GTP-bound translation factors. Is thus essential for accurate translation. The polypeptide is Large ribosomal subunit protein bL12 (Chloroflexus aurantiacus (strain ATCC 29366 / DSM 635 / J-10-fl)).